Reading from the N-terminus, the 445-residue chain is Putative ubiquitin carboxyl-terminal hydrolase L293 (445 aa).

One can recognise a USP domain in the interval Lys-133–Ile-441. Cys-142 acts as the Nucleophile in catalysis. The active-site Proton acceptor is His-384.

Belongs to the peptidase C19 family.

Its subcellular location is the virion. The enzyme catalyses Thiol-dependent hydrolysis of ester, thioester, amide, peptide and isopeptide bonds formed by the C-terminal Gly of ubiquitin (a 76-residue protein attached to proteins as an intracellular targeting signal).. This Acanthamoeba polyphaga mimivirus (APMV) protein is Putative ubiquitin carboxyl-terminal hydrolase L293.